The primary structure comprises 228 residues: MNSKYDYFYEIDTRYDDDDYDDDELIIHISKEDEQFLNLNSTHYDCEDDEEKEEVHGFPELPDKLTCPPAVSLKHILMDEEAATSTTPTVILGDVSKHTRPCDVTSKYCNDSRCVSTKLDGIWTTKQCKLKHIGESEENYCLRLGTLRNDNEQIPKLKVNQHPSQCIIEFIATCMRDCGPKLKSLDIIVSPTETLSEHFANRFDLHKDIIENHSDNSMMDTELDYYYY.

The protein belongs to the ascovirus HvAv ORF57 family.

This is an uncharacterized protein from Trichoplusia ni ascovirus 2c (TnAV-2c).